A 183-amino-acid polypeptide reads, in one-letter code: A-type ATP synthase subunit E (183 aa).

It belongs to the V-ATPase E subunit family. As to quaternary structure, has multiple subunits, A(3), B(3), C, D, E, F, G, I and K(x); there may be a few other subunits as well.

The protein resides in the cell membrane. Its function is as follows. Component of the A-type ATP synthase that produces ATP from ADP in the presence of a proton gradient across the membrane. This is A-type ATP synthase subunit E from Methanosarcina mazei (strain ATCC BAA-159 / DSM 3647 / Goe1 / Go1 / JCM 11833 / OCM 88) (Methanosarcina frisia).